A 250-amino-acid chain; its full sequence is 2,3-bisphosphoglycerate-dependent phosphoglycerate mutase (250 aa).

Substrate is bound by residues 8–15, 21–22, Arg-60, 87–90, Lys-98, 114–115, and 183–184; these read RHGESEWN, TG, ERHY, RR, and GN. His-9 functions as the Tele-phosphohistidine intermediate in the catalytic mechanism. The active-site Proton donor/acceptor is Glu-87.

It belongs to the phosphoglycerate mutase family. BPG-dependent PGAM subfamily.

The catalysed reaction is (2R)-2-phosphoglycerate = (2R)-3-phosphoglycerate. It functions in the pathway carbohydrate degradation; glycolysis; pyruvate from D-glyceraldehyde 3-phosphate: step 3/5. In terms of biological role, catalyzes the interconversion of 2-phosphoglycerate and 3-phosphoglycerate. This is 2,3-bisphosphoglycerate-dependent phosphoglycerate mutase from Borrelia duttonii (strain Ly).